A 235-amino-acid chain; its full sequence is uncharacterized protein (235 aa).

The 140-residue stretch at 82–221 folds into the N-acetyltransferase domain; sequence LAFKKFPPDP…DTGELIRESP (140 aa).

Belongs to the acetyltransferase family.

It is found in the golgi apparatus membrane. The protein localises to the endoplasmic reticulum membrane. This is an uncharacterized protein from Schizosaccharomyces pombe (strain 972 / ATCC 24843) (Fission yeast).